Reading from the N-terminus, the 170-residue chain is Cathelicidin antimicrobial peptide (170 aa).

The N-terminal stretch at 1–30 is a signal peptide; sequence MKTQRDGHSLGRWSLVLLLLGLVMPLAIIA. Positions 31-131 are cleaved as a propeptide — cathelin-like domain (CLD); sequence QVLSYKEAVL…DISCDKDNKR (101 aa). Cystine bridges form between Cys-86/Cys-97 and Cys-108/Cys-125. The active core stretch occupies residues 150–162; the sequence is FKRIVQRIKDFLR.

Belongs to the cathelicidin family. Monomer, homodimer or homotrimer (in vitro). Oligomerizes as tetra- or hexamer in solution (in vitro). Post-translationally, the N-terminus is blocked. Proteolytically cleaved by proteinase PRTN3 into antibacterial peptide LL-37. Proteolytically cleaved by cathepsin CTSG and neutrophil elastase ELANE. In terms of processing, resistant to proteolytic degradation in solution, and when bound to both zwitterionic (mimicking mammalian membranes) and negatively charged membranes (mimicking bacterial membranes). Post-translationally, after secretion onto the skin surface, the CAMP gene product is processed by a serine protease-dependent mechanism into multiple novel antimicrobial peptides distinct from and shorter than cathelicidin LL-37, such as peptides KR-20 (residues 151-170), LL-23 (residues 134-156), LL-29 (residues 134-162), KS-30 (residues 141-170), RK-31 (residues 140-170) and FF-33 (residues 138-170). The peptides act synergistically, killing bacteria at lower concentrations when present together, and maintain activity at increased salt condition. Expressed in neutrophilic granulocytes (at protein level). Expressed in bone marrow. As to expression, expressed in granulocytes (at protein level). Expressed by the eccrine apparatus and secreted into sweat on skin (at protein level). In terms of tissue distribution, expressed in bone marrow and testis.

It localises to the secreted. Its subcellular location is the vesicle. Its function is as follows. Antimicrobial protein that is an integral component of the innate immune system. Binds to bacterial lipopolysaccharides (LPS). Acts via neutrophil N-formyl peptide receptors to enhance the release of CXCL2. Postsecretory processing generates multiple cathelicidin antimicrobial peptides with various lengths which act as a topical antimicrobial defense in sweat on skin. The unprocessed precursor form, cathelicidin antimicrobial peptide, inhibits the growth of Gram-negative E.coli and E.aerogenes with efficiencies comparable to that of the mature peptide LL-37 (in vitro). Antimicrobial peptide that is an integral component of the innate immune system. Binds to bacterial lipopolysaccharides (LPS). Causes membrane permeabilization by forming transmembrane pores (in vitro). Causes lysis of E.coli. Exhibits antimicrobial activity against Gram-negative bacteria such as P.aeruginosa, S.typhimurium, E.aerogenes, E.coli and P.syringae, Gram-positive bacteria such as L.monocytogenes, S.epidermidis, S.pyogenes and S.aureus, as well as vancomycin-resistant enterococci (in vitro). Exhibits antimicrobial activity against methicillin-resistant S.aureus, P.mirabilis, and C.albicans in low-salt media, but not in media containing 100 mM NaCl (in vitro). Forms chiral supramolecular assemblies with quinolone signal (PQS) molecules of P.aeruginosa, which may lead to interference of bacterial quorum signaling and perturbance of bacterial biofilm formation. May form supramolecular fiber-like assemblies on bacterial membranes. Induces cytokine and chemokine production as well as TNF/TNFA and CSF2/GMCSF production in normal human keratinocytes. Exhibits hemolytic activity against red blood cells. Functionally, exhibits antimicrobial activity against E.coli and B.megaterium (in vitro). In terms of biological role, acts synergistically with peptides KS-30 and KR-31, killing bacteria such as S.aureus, E.coli and C.albicans at lower concentrations when present together, and maintains activity at increased salt condition. Does not have the ability to stimulate CXCL8/IL8 release from keratinocytes. Its function is as follows. Poorly active (MIC &gt; 150 uM) against E.coli strain K12. Is able to induce the pro-inflammatory cytokine TNF/TNFA or the chemokine CCL2/MCP1. Moderately antibacterial. Functionally, moderately antibacterial. Acts synergistically with peptides KR-20 and KR-31, killing bacteria such as S.aureus, E.coli and C.albicans at lower concentrations when present together, and maintain activity at increased salt condition. Does not have the ability to stimulate CXCL8/IL8 release from keratinocytes. In terms of biological role, acts synergistically with peptides KS-30 and KR-31, killing bacteria such as S.aureus, E.coli and C.albicans at lower concentrations when present together, and maintain activity at increased salt condition. Does not have the ability to stimulate CXCL8/IL8 release from keratinocytes. Its function is as follows. Inhibits the growth of E.coli and B.megaterium and exhibits hemolytic activity against human red blood cells. The sequence is that of Cathelicidin antimicrobial peptide from Homo sapiens (Human).